The following is a 376-amino-acid chain: Serpin B6 (376 aa).

An N-acetylmethionine modification is found at M1. The residue at position 151 (S151) is a Phosphoserine. K195 carries the N6-acetyllysine modification.

The protein belongs to the serpin family. Ov-serpin subfamily. Forms a complex with the monomeric form of beta-tryptase.

It is found in the cytoplasm. In terms of biological role, inhibitor of cathepsin G, kallikrein-8 and thrombin. May play an important role in the inner ear in the protection against leakage of lysosomal content during stress. May be involved in the regulation of serine proteinases present in the brain or extravasated from the blood. The protein is Serpin B6 (SERPINB6) of Macaca fascicularis (Crab-eating macaque).